We begin with the raw amino-acid sequence, 25 residues long: Ranatuerin-1 (25 aa).

Cys19 and Cys25 are disulfide-bonded.

Belongs to the frog skin active peptide (FSAP) family. Ranatuerin subfamily. As to expression, expressed by the skin glands.

The protein localises to the secreted. In terms of biological role, antibacterial activity against Gram-positive bacterium S.aureus (MIC=50 uM) and Gram-negative bacterium E.coli (MIC=2 uM). Has activity against C.albicans (MIC=70 uM). Shows no detectable hemolytic activity towards human erythrocytes. The sequence is that of Ranatuerin-1 from Aquarana catesbeiana (American bullfrog).